Consider the following 515-residue polypeptide: 2-isopropylmalate synthase (515 aa).

The Pyruvate carboxyltransferase domain occupies Ile4–Lys266. Mn(2+)-binding residues include Asp13, His201, His203, and Asn237. The interval Gln391–Pro515 is regulatory domain.

Belongs to the alpha-IPM synthase/homocitrate synthase family. LeuA type 1 subfamily. As to quaternary structure, homodimer. It depends on Mn(2+) as a cofactor.

It is found in the cytoplasm. It carries out the reaction 3-methyl-2-oxobutanoate + acetyl-CoA + H2O = (2S)-2-isopropylmalate + CoA + H(+). It participates in amino-acid biosynthesis; L-leucine biosynthesis; L-leucine from 3-methyl-2-oxobutanoate: step 1/4. In terms of biological role, catalyzes the condensation of the acetyl group of acetyl-CoA with 3-methyl-2-oxobutanoate (2-ketoisovalerate) to form 3-carboxy-3-hydroxy-4-methylpentanoate (2-isopropylmalate). This Geobacillus thermodenitrificans (strain NG80-2) protein is 2-isopropylmalate synthase.